Here is a 207-residue protein sequence, read N- to C-terminus: Large ribosomal subunit protein uL4 (207 aa).

Residues 47-78 (GTHKVKNRSEVRGGGRKPWRQKGTGRARQGSI) are disordered. The span at 60–71 (GGRKPWRQKGTG) shows a compositional bias: basic residues.

This sequence belongs to the universal ribosomal protein uL4 family. In terms of assembly, part of the 50S ribosomal subunit.

Its function is as follows. One of the primary rRNA binding proteins, this protein initially binds near the 5'-end of the 23S rRNA. It is important during the early stages of 50S assembly. It makes multiple contacts with different domains of the 23S rRNA in the assembled 50S subunit and ribosome. In terms of biological role, forms part of the polypeptide exit tunnel. This is Large ribosomal subunit protein uL4 from Listeria innocua serovar 6a (strain ATCC BAA-680 / CLIP 11262).